The primary structure comprises 188 residues: Threonylcarbamoyl-AMP synthase (188 aa).

Positions Gln-3–Gln-188 constitute a YrdC-like domain.

It belongs to the SUA5 family. TsaC subfamily.

It localises to the cytoplasm. The catalysed reaction is L-threonine + hydrogencarbonate + ATP = L-threonylcarbamoyladenylate + diphosphate + H2O. Required for the formation of a threonylcarbamoyl group on adenosine at position 37 (t(6)A37) in tRNAs that read codons beginning with adenine. Catalyzes the conversion of L-threonine, HCO(3)(-)/CO(2) and ATP to give threonylcarbamoyl-AMP (TC-AMP) as the acyladenylate intermediate, with the release of diphosphate. This Shewanella putrefaciens (strain CN-32 / ATCC BAA-453) protein is Threonylcarbamoyl-AMP synthase.